The primary structure comprises 132 residues: Large ribosomal subunit protein uL24 (132 aa).

The protein belongs to the universal ribosomal protein uL24 family. Part of the 50S ribosomal subunit.

One of two assembly initiator proteins, it binds directly to the 5'-end of the 23S rRNA, where it nucleates assembly of the 50S subunit. Its function is as follows. Located at the polypeptide exit tunnel on the outside of the subunit. This chain is Large ribosomal subunit protein uL24, found in Aeropyrum pernix (strain ATCC 700893 / DSM 11879 / JCM 9820 / NBRC 100138 / K1).